We begin with the raw amino-acid sequence, 182 residues long: MALQDKGILEALLYTAGDEGLDQQQLLEILEIEPTTLTELIEAYDSPGLTIQHYGNTYVLTTKKEASDYIEQLIEQKSKMKLSQAAMESLSIIAYNQPLSRSDIELIRGINSDGAVKTLIARGLVEAKEEADSRSHQLYTTELFLNVFGIEHLDDLPTTDEEDEEIEAFFSNLVNQKGDNHE.

Belongs to the ScpB family. In terms of assembly, homodimer. Homodimerization may be required to stabilize the binding of ScpA to the Smc head domains. Component of a cohesin-like complex composed of ScpA, ScpB and the Smc homodimer, in which ScpA and ScpB bind to the head domain of Smc. The presence of the three proteins is required for the association of the complex with DNA.

The protein resides in the cytoplasm. Participates in chromosomal partition during cell division. May act via the formation of a condensin-like complex containing Smc and ScpA that pull DNA away from mid-cell into both cell halves. This chain is Segregation and condensation protein B, found in Staphylococcus saprophyticus subsp. saprophyticus (strain ATCC 15305 / DSM 20229 / NCIMB 8711 / NCTC 7292 / S-41).